A 916-amino-acid chain; its full sequence is Nitrate reductase [NADH] 1 (916 aa).

Residues 1–77 are disordered; that stretch reads MAASVQPRQF…DDEEEEQEDW (77 aa). Positions 66-76 are enriched in acidic residues; sequence GSDDEEEEQED. Cys192 lines the Mo-molybdopterin pocket. Residues 541-616 enclose the Cytochrome b5 heme-binding domain; it reads GKQFTMSEVR…LDTYRIGELI (76 aa). Heme is bound by residues His576 and His599. Residues 656–768 enclose the FAD-binding FR-type domain; that stretch reads RDKVPCQLVD…KGPLGHVEYT (113 aa). FAD is bound by residues 708–711, 725–729, Phe730, Phe737, 742–744, Ser792, and Thr795; these read RAYT, LIKVY, and LMT.

The protein belongs to the nitrate reductase family. Homodimer. The cofactor is FAD. Heme is required as a cofactor. It depends on Mo-molybdopterin as a cofactor.

It catalyses the reaction nitrite + NAD(+) + H2O = nitrate + NADH + H(+). Its function is as follows. Nitrate reductase is a key enzyme involved in the first step of nitrate assimilation in plants, fungi and bacteria. The polypeptide is Nitrate reductase [NADH] 1 (NIA1) (Oryza sativa subsp. japonica (Rice)).